We begin with the raw amino-acid sequence, 229 residues long: Uracil-DNA glycosylase (229 aa).

The Proton acceptor role is filled by Asp65.

The protein belongs to the uracil-DNA glycosylase (UDG) superfamily. UNG family.

Its subcellular location is the cytoplasm. The catalysed reaction is Hydrolyzes single-stranded DNA or mismatched double-stranded DNA and polynucleotides, releasing free uracil.. Its function is as follows. Excises uracil residues from the DNA which can arise as a result of misincorporation of dUMP residues by DNA polymerase or due to deamination of cytosine. In Limosilactobacillus reuteri (strain DSM 20016) (Lactobacillus reuteri), this protein is Uracil-DNA glycosylase.